The sequence spans 722 residues: Formin-like protein 16 (722 aa).

4 disordered regions span residues 1–56 (MSPV…PMFD), 564–606 (ATED…PSRP), 635–672 (VGSP…HLSH), and 690–722 (PLLV…LRYQ). The segment covering 22–55 (PLPPPPPPPMRRSAPSPPPMSGRVPPPPPPPPMF) has biased composition (pro residues). The region spanning 182–571 (FRCPVTKRSS…KAATEDVFGG (390 aa)) is the FH2 domain. 3 stretches are compositionally biased toward pro residues: residues 593–605 (IRPP…PPSR), 638–658 (PSPP…PPPM), and 709–722 (APPP…LRYQ).

It belongs to the formin-like family. Class-II subfamily.

This is Formin-like protein 16 (FH16) from Arabidopsis thaliana (Mouse-ear cress).